Consider the following 423-residue polypeptide: Serine--tRNA ligase (423 aa).

L-serine is bound at residue 231-233; that stretch reads TAE. 262-264 provides a ligand contact to ATP; the sequence is RSE. L-serine is bound at residue Glu-285. 349 to 352 contacts ATP; the sequence is EISS. Ser-384 contributes to the L-serine binding site.

The protein belongs to the class-II aminoacyl-tRNA synthetase family. Type-1 seryl-tRNA synthetase subfamily. Homodimer. The tRNA molecule binds across the dimer.

It is found in the cytoplasm. The enzyme catalyses tRNA(Ser) + L-serine + ATP = L-seryl-tRNA(Ser) + AMP + diphosphate + H(+). It catalyses the reaction tRNA(Sec) + L-serine + ATP = L-seryl-tRNA(Sec) + AMP + diphosphate + H(+). It participates in aminoacyl-tRNA biosynthesis; selenocysteinyl-tRNA(Sec) biosynthesis; L-seryl-tRNA(Sec) from L-serine and tRNA(Sec): step 1/1. Functionally, catalyzes the attachment of serine to tRNA(Ser). Is also able to aminoacylate tRNA(Sec) with serine, to form the misacylated tRNA L-seryl-tRNA(Sec), which will be further converted into selenocysteinyl-tRNA(Sec). This Lactococcus lactis subsp. cremoris (strain MG1363) protein is Serine--tRNA ligase.